The following is a 366-amino-acid chain: Endophilin-A (366 aa).

One can recognise a BAR domain in the interval Thr18 to Ser248. Positions Gln227–Glu247 form a coiled coil. Residues Gly266–Ala295 form a disordered region. The span at Pro277 to Pro294 shows a compositional bias: low complexity. An SH3 domain is found at Gln305–Pro364.

This sequence belongs to the endophilin family.

The protein localises to the cytoplasm. It localises to the membrane. Functionally, required presynaptically at the neuromuscular junction. Implicated in synaptic vesicle endocytosis. This Drosophila willistoni (Fruit fly) protein is Endophilin-A.